The sequence spans 94 residues: Cystatin-A3 (94 aa).

The short motif at 46 to 50 is the Secondary area of contact element; it reads QLVNG.

This sequence belongs to the cystatin family.

The protein localises to the cytoplasm. Intracellular thiol proteinase inhibitor. This chain is Cystatin-A3 (cpiC), found in Dictyostelium discoideum (Social amoeba).